The primary structure comprises 1163 residues: MPVRRGHVAPQNTFLDTIIRKFEGQSRKFIIANARVENCAVIYCNDGFCELCGYSRAEVMQRPCTCDFLHGPRTQRRAAAQIAQALLGAEERKVEIAFYRKDGSCFLCLVDVVPVKNEDGAVIMFILNFEVVMEKDMVGSPAHDTNHRGPSTSWLASGRAKTFRLKLPALLALTARESPMRTGSTGSPGAPGAVVVDVDLTPAAPSSESLALDEVSAMDNHVAGLGPAEERRALVGPASASPVASIPGPHPSPRAQSLNPDASGSSCSLARTRSRESCASVRRASSADDIEAMRAGALPLPPRHASTGAMHPLRSGLLNSTSDSDLVRYRTISKIPQITLNFVDLKGDPFLASPTSDREIIAPKIKERTHNVTEKVTQVLSLGADVLPEYKLQAPRIHRWTILHYSPFKAVWDWLILLLVIYTAVFTPYSAAFLLKETEDGSQAPDCGYACQPLAVVDLLVDIMFIVDILINFRTTYVNANEEVVSHPGRIAVHYFKGWFLIDMVAAIPFDLLIFGSGSEELIGLLKTARLLRLVRVARKLDRYSEYGAAVLFLLMCTFALIAHWLACIWYAIGNMEQPHMDSHIGWLHNLGDQIGKPYNSSGLGGPSIKDKYVTALYFTFSSLTSVGFGNVSPNTNSEKIFSICVMLIGSLMYASIFGNVSAIIQRLYSGTARYHTQMLRVREFIRFHQIPNPLRQRLEEYFQHAWSYTNGIDMNAVLKGFPECLQADICLHLNRSLLQHCKPFRGATKGCLRALAMKFKTTHAPPGDTLVHAGDLLTALYFISRGSIEILRGDVVVAILGKNDIFGEPLNLYARPGKSNGDVRALTYCDLHKIHRDDLLEVLDMYPEFSDHFWSSLEITFNLRDTNMIPGSPSSAELESGFNRQRKRKLSFRRRTDKDTEQPGEVSALGQGPARVGPGPSCRGQPGGPWGESPSSGPSSPESSEDEGPGRSSSPLRLVPFSSPRPPGDSPGGEPLTEDGEKSSDTCNPLSGAFSGVSNIFSFWGDSRGRQYQELPRCPAPAPSLLNIPLSSPGRRSRGDVESRLDALQRQLNRLETRLSADMATVLQLLQRQMTLVPPAYSAVTTPGPGPTSTSPLLPVGPVPTLTLDSLSQVSQFVAFEELPAGAPELPQDGPTRRLSLPGQLGALTSQPLHRHGSDPGS.

The Cytoplasmic segment spans residues 1–405; it reads MPVRRGHVAP…RIHRWTILHY (405 aa). Positions 17-88 constitute a PAS domain; that stretch reads TIIRKFEGQS…AAQIAQALLG (72 aa). The PAC domain maps to 92–144; that stretch reads RKVEIAFYRKDGSCFLCLVDVVPVKNEDGAVIMFILNFEVVMEKDMVGSPAHD. Residues 235-286 form a disordered region; sequence VGPASASPVASIPGPHPSPRAQSLNPDASGSSCSLARTRSRESCASVRRASS. A phosphoserine mark is found at S239 and S245. Residues 254 to 271 show a composition bias toward polar residues; it reads RAQSLNPDASGSSCSLAR. Phosphoserine occurs at positions 285, 286, 322, and 353. The chain crosses the membrane as a helical span at residues 406–426; the sequence is SPFKAVWDWLILLLVIYTAVF. Residues 427–452 are Extracellular-facing; sequence TPYSAAFLLKETEDGSQAPDCGYACQ. The chain crosses the membrane as a helical span at residues 453–473; it reads PLAVVDLLVDIMFIVDILINF. Residues 474 to 497 are Cytoplasmic-facing; it reads RTTYVNANEEVVSHPGRIAVHYFK. A helical transmembrane segment spans residues 498–518; the sequence is GWFLIDMVAAIPFDLLIFGSG. The Extracellular segment spans residues 519–522; the sequence is SEEL. Residues 523–543 traverse the membrane as a helical; Voltage-sensor segment; the sequence is IGLLKTARLLRLVRVARKLDR. Residues 544–549 are Cytoplasmic-facing; that stretch reads YSEYGA. The helical transmembrane segment at 550–570 threads the bilayer; sequence AVLFLLMCTFALIAHWLACIW. Topologically, residues 571 to 613 are extracellular; it reads YAIGNMEQPHMDSHIGWLHNLGDQIGKPYNSSGLGGPSIKDKY. N-linked (GlcNAc...) asparagine glycosylation is present at N600. Positions 614–634 form an intramembrane region, pore-forming; it reads VTALYFTFSSLTSVGFGNVSP. A Selectivity filter motif is present at residues 626–631; it reads SVGFGN. Residues 635-640 are Extracellular-facing; the sequence is NTNSEK. The chain crosses the membrane as a helical span at residues 641–661; it reads IFSICVMLIGSLMYASIFGNV. The Cytoplasmic segment spans residues 662–1163; sequence SAIIQRLYSG…LHRHGSDPGS (502 aa). A cNMP-binding domain region spans residues 744–844; it reads PFRGATKGCL…IHRDDLLEVL (101 aa). Residues S873 and S876 each carry the phosphoserine modification. 3 disordered regions span residues 873-992, 1015-1043, and 1126-1163; these read SPSS…NPLS, ELPR…GDVE, and AGAP…DPGS. The segment covering 885 to 894 has biased composition (basic residues); sequence RQRKRKLSFR. Residues 932–943 show a composition bias toward low complexity; that stretch reads GESPSSGPSSPE. An Omega-N-methylarginine modification is found at R1018. A coiled-coil region spans residues 1039–1066; it reads RGDVESRLDALQRQLNRLETRLSADMAT. S1141 is modified (phosphoserine).

Belongs to the potassium channel family. H (Eag) (TC 1.A.1.20) subfamily. Kv11.1/KCNH2 sub-subfamily. The potassium channel is probably composed of a homo- or heterotetrameric complex of pore-forming alpha subunits that can associate with modulating beta subunits. Interacts with DNAJB12 and DNAJB14; chaperones DNAJB12 and DNAJB14 promote tetramerization. Heteromultimer with KCNH6/ERG2 and KCNH7/ERG3. Interacts with ALG10B. Forms a stable complex with KCNE1 or KCNE2, and that this heteromultimerization regulates Inward rectifier potassium channel activity. Interacts with CANX. The core-glycosylated, but not the fully glycosylated form interacts with RNF207. Interacts with NDFIP1 and NDFIP2; this interaction decreases the cell membrane expression by targeting KCNH2, through interaction with NEDD4L, for the degradation through the multivesicular bodies (MVBs)-lysosomal pathway. In terms of processing, phosphorylated on serine and threonine residues. Phosphorylation by PKA inhibits ion conduction. Highly expressed in brain and testis, slightly less so in heart, adrenal, retina and thymus. Detected at lower levels in lung, soleus, tibialis, and at very low levels in cornea and lens. A shorter transcript is detected in skeletal muscle. Found in pituitary.

Its subcellular location is the cell membrane. It catalyses the reaction K(+)(in) = K(+)(out). Functionally, pore-forming (alpha) subunit of voltage-gated inwardly rectifying potassium channel. Characterized by unusual gating kinetics by producing relatively small outward currents during membrane depolarization and large inward currents during subsequent repolarization which reflect a rapid inactivation during depolarization and quick recovery from inactivation but slow deactivation (closing) during repolarization. Channel properties are modulated by cAMP and subunit assembly. Forms a stable complex with KCNE1 or KCNE2, and that this heteromultimerization regulates inward rectifier potassium channel activity. In Rattus norvegicus (Rat), this protein is Voltage-gated inwardly rectifying potassium channel KCNH2.